The chain runs to 182 residues: uncharacterized protein (182 aa).

Residues 17–34 (LSLVLFAVLSVLPLGGCA) traverse the membrane as a helical segment. 2 TPR repeats span residues 89 to 122 (VDAA…TPDN) and 123 to 156 (LRAL…NPEN).

It is found in the membrane. This is an uncharacterized protein from Sinorhizobium fredii (strain NBRC 101917 / NGR234).